Here is a 217-residue protein sequence, read N- to C-terminus: LexA repressor (217 aa).

Residues 28–48 constitute a DNA-binding region (H-T-H motif); sequence RAEIAAEFGFSSPNAAEEHLR. Active-site for autocatalytic cleavage activity residues include Ser-136 and Lys-173.

It belongs to the peptidase S24 family. In terms of assembly, homodimer.

It carries out the reaction Hydrolysis of Ala-|-Gly bond in repressor LexA.. Represses a number of genes involved in the response to DNA damage (SOS response), including recA and lexA. In the presence of single-stranded DNA, RecA interacts with LexA causing an autocatalytic cleavage which disrupts the DNA-binding part of LexA, leading to derepression of the SOS regulon and eventually DNA repair. The sequence is that of LexA repressor from Cupriavidus taiwanensis (strain DSM 17343 / BCRC 17206 / CCUG 44338 / CIP 107171 / LMG 19424 / R1) (Ralstonia taiwanensis (strain LMG 19424)).